We begin with the raw amino-acid sequence, 624 residues long: Laccase-1 (624 aa).

The first 20 residues, 1–20, serve as a signal peptide directing secretion; it reads MRGLAKLFFLSCSFVSLVSS. Plastocyanin-like domains are found at residues 72–183 and 195–343; these read FASP…HSPN and DRIV…CMFG. Cu cation is bound by residues H117 and H119. C138 and C578 are disulfide-bonded. The N-linked (GlcNAc...) asparagine glycan is linked to N149. Cu cation contacts are provided by H162 and H164. N-linked (GlcNAc...) asparagine glycosylation is found at N242 and N430. Residues 469–562 enclose the Plastocyanin-like 3 domain; that stretch reads IIINNLDTVI…GKLAVIVVQP (94 aa). Cu cation contacts are provided by H480, H483, and H485. N-linked (GlcNAc...) asparagine glycosylation is present at N503. H543, C544, H545, and H549 together coordinate Cu cation. The segment at 579–604 is disordered; it reads ANTDPNAFGPAKRSSSPSIQSSKTSS. Residues 592-604 are compositionally biased toward low complexity; the sequence is SSSPSIQSSKTSS.

The protein belongs to the multicopper oxidase family. The cofactor is Cu cation.

It localises to the secreted. It is found in the cell wall. It carries out the reaction 4 hydroquinone + O2 = 4 benzosemiquinone + 2 H2O. Its function is as follows. Laccase that catalyzes the oxidation of certain aromatic compounds, including L-dopa, to quinones, which then polymerize to melanin. Able to oxidize a wide variety of aromatic diphenol and diamino groups in the ortho, meta, and para positions but not monophenolic groups such as in phenol, tyramine, or tyrosine. Plays an important role in virulence. Plays a role in dissemination to extrapulmonary sites but is not involved in pulmonary growth or in elicitation of cellular immune responses in the lung. In Cryptococcus neoformans var. neoformans serotype D (strain B-3501A) (Filobasidiella neoformans), this protein is Laccase-1.